A 617-amino-acid chain; its full sequence is Proline--tRNA ligase (617 aa).

Belongs to the class-II aminoacyl-tRNA synthetase family. ProS type 1 subfamily. As to quaternary structure, homodimer.

It is found in the cytoplasm. The catalysed reaction is tRNA(Pro) + L-proline + ATP = L-prolyl-tRNA(Pro) + AMP + diphosphate. Functionally, catalyzes the attachment of proline to tRNA(Pro) in a two-step reaction: proline is first activated by ATP to form Pro-AMP and then transferred to the acceptor end of tRNA(Pro). As ProRS can inadvertently accommodate and process non-cognate amino acids such as alanine and cysteine, to avoid such errors it has two additional distinct editing activities against alanine. One activity is designated as 'pretransfer' editing and involves the tRNA(Pro)-independent hydrolysis of activated Ala-AMP. The other activity is designated 'posttransfer' editing and involves deacylation of mischarged Ala-tRNA(Pro). The misacylated Cys-tRNA(Pro) is not edited by ProRS. This is Proline--tRNA ligase from Streptococcus pneumoniae (strain P1031).